Consider the following 668-residue polypeptide: UvrABC system protein B (668 aa).

Residues 36–276 (DNIKGGEKAQ…EEAIKNIMEE (241 aa)) form the Helicase ATP-binding domain. 49 to 56 (GATGTGKT) is an ATP binding site. Positions 102–125 (YYDYYQPEAYVPSSDTYIEKDSSV) match the Beta-hairpin motif. The Helicase C-terminal domain maps to 440–606 (QMDDLLGEIN…TIKKEIRDLI (167 aa)). Residues 632–667 (QEAIKKLQKQMHEAAELLDFELAAQIRDMVLELKSM) form the UVR domain.

This sequence belongs to the UvrB family. In terms of assembly, forms a heterotetramer with UvrA during the search for lesions. Interacts with UvrC in an incision complex.

It is found in the cytoplasm. Functionally, the UvrABC repair system catalyzes the recognition and processing of DNA lesions. A damage recognition complex composed of 2 UvrA and 2 UvrB subunits scans DNA for abnormalities. Upon binding of the UvrA(2)B(2) complex to a putative damaged site, the DNA wraps around one UvrB monomer. DNA wrap is dependent on ATP binding by UvrB and probably causes local melting of the DNA helix, facilitating insertion of UvrB beta-hairpin between the DNA strands. Then UvrB probes one DNA strand for the presence of a lesion. If a lesion is found the UvrA subunits dissociate and the UvrB-DNA preincision complex is formed. This complex is subsequently bound by UvrC and the second UvrB is released. If no lesion is found, the DNA wraps around the other UvrB subunit that will check the other stand for damage. The protein is UvrABC system protein B of Streptococcus thermophilus (strain ATCC BAA-491 / LMD-9).